An 80-amino-acid chain; its full sequence is Small ribosomal subunit protein bS16c (80 aa).

Belongs to the bacterial ribosomal protein bS16 family.

The protein resides in the plastid. It localises to the chloroplast. The polypeptide is Small ribosomal subunit protein bS16c (Lotus japonicus (Lotus corniculatus var. japonicus)).